The chain runs to 451 residues: Tubulin alpha-2 chain (451 aa).

8 residues coordinate GTP: glutamine 12, aspartate 73, serine 142, glycine 146, threonine 147, threonine 181, asparagine 208, and asparagine 230. Aspartate 73 is a binding site for Mg(2+). The active site involves glutamate 256.

Belongs to the tubulin family. In terms of assembly, dimer of alpha and beta chains. A typical microtubule is a hollow water-filled tube with an outer diameter of 25 nm and an inner diameter of 15 nM. Alpha-beta heterodimers associate head-to-tail to form protofilaments running lengthwise along the microtubule wall with the beta-tubulin subunit facing the microtubule plus end conferring a structural polarity. Microtubules usually have 13 protofilaments but different protofilament numbers can be found in some organisms and specialized cells. It depends on Mg(2+) as a cofactor.

The protein resides in the cytoplasm. Its subcellular location is the cytoskeleton. It catalyses the reaction GTP + H2O = GDP + phosphate + H(+). In terms of biological role, tubulin is the major constituent of microtubules, a cylinder consisting of laterally associated linear protofilaments composed of alpha- and beta-tubulin heterodimers. Microtubules grow by the addition of GTP-tubulin dimers to the microtubule end, where a stabilizing cap forms. Below the cap, tubulin dimers are in GDP-bound state, owing to GTPase activity of alpha-tubulin. The polypeptide is Tubulin alpha-2 chain (tubB) (Emericella nidulans (strain FGSC A4 / ATCC 38163 / CBS 112.46 / NRRL 194 / M139) (Aspergillus nidulans)).